Reading from the N-terminus, the 161-residue chain is Capsid protein (161 aa).

Belongs to the virgaviridae capsid protein family.

The protein localises to the virion. Capsid protein self-assembles to form rod-shaped virions about 18 nm in diameter with a central canal enclosing the viral genomic RNA. The chain is Capsid protein (CP) from Tobamovirus Ob.